A 40-amino-acid polypeptide reads, in one-letter code: Large ribosomal subunit protein bL36B (40 aa).

This sequence belongs to the bacterial ribosomal protein bL36 family.

The protein is Large ribosomal subunit protein bL36B of Kocuria rhizophila (strain ATCC 9341 / DSM 348 / NBRC 103217 / DC2201).